A 1383-amino-acid chain; its full sequence is DNA-directed RNA polymerase subunit beta'' (1383 aa).

Residues Cys220, Cys289, Cys296, and Cys299 each coordinate Zn(2+).

It belongs to the RNA polymerase beta' chain family. RpoC2 subfamily. In terms of assembly, in plastids the minimal PEP RNA polymerase catalytic core is composed of four subunits: alpha, beta, beta', and beta''. When a (nuclear-encoded) sigma factor is associated with the core the holoenzyme is formed, which can initiate transcription. The cofactor is Zn(2+).

The protein resides in the plastid. Its subcellular location is the chloroplast. It catalyses the reaction RNA(n) + a ribonucleoside 5'-triphosphate = RNA(n+1) + diphosphate. DNA-dependent RNA polymerase catalyzes the transcription of DNA into RNA using the four ribonucleoside triphosphates as substrates. The sequence is that of DNA-directed RNA polymerase subunit beta'' from Oenothera argillicola (Appalachian evening primrose).